The primary structure comprises 498 residues: ATP synthase subunit beta, chloroplastic (498 aa).

Residue 172–179 (GGAGVGKT) coordinates ATP.

It belongs to the ATPase alpha/beta chains family. As to quaternary structure, F-type ATPases have 2 components, CF(1) - the catalytic core - and CF(0) - the membrane proton channel. CF(1) has five subunits: alpha(3), beta(3), gamma(1), delta(1), epsilon(1). CF(0) has four main subunits: a(1), b(1), b'(1) and c(9-12).

It localises to the plastid. Its subcellular location is the chloroplast thylakoid membrane. It catalyses the reaction ATP + H2O + 4 H(+)(in) = ADP + phosphate + 5 H(+)(out). Its function is as follows. Produces ATP from ADP in the presence of a proton gradient across the membrane. The catalytic sites are hosted primarily by the beta subunits. The polypeptide is ATP synthase subunit beta, chloroplastic (Lolium perenne (Perennial ryegrass)).